The sequence spans 85 residues: Large ribosomal subunit protein bL31B (85 aa).

The protein belongs to the bacterial ribosomal protein bL31 family. Type B subfamily. Part of the 50S ribosomal subunit.

This chain is Large ribosomal subunit protein bL31B, found in Pseudomonas entomophila (strain L48).